A 655-amino-acid polypeptide reads, in one-letter code: p-hydroxybenzoic acid efflux pump subunit AaeB (655 aa).

The Periplasmic segment spans residues 1–12; the sequence is MGIFSIANQHIR. Residues 13 to 33 traverse the membrane as a helical segment; that stretch reads FAVKLACAIVLALFIGFHFQL. The Cytoplasmic portion of the chain corresponds to 34–37; sequence ETPR. The helical transmembrane segment at 38–58 threads the bilayer; sequence WAVLTAAIVAAGPAFAAGGEP. Topologically, residues 59–68 are periplasmic; the sequence is YSGAIRYRGM. The helical transmembrane segment at 69–89 threads the bilayer; it reads LRIIGTFIGCIAALIIIISMI. The Cytoplasmic portion of the chain corresponds to 90–92; that stretch reads RAP. A helical membrane pass occupies residues 93–113; the sequence is LLMILVCCVWAGFCTWISSLV. The Periplasmic portion of the chain corresponds to 114-120; that stretch reads RIENSYA. The helical transmembrane segment at 121-141 threads the bilayer; that stretch reads WGLSGYTALIIVITIQTEPLL. Over 142–151 the chain is Cytoplasmic; that stretch reads TPQFALERCS. The helical transmembrane segment at 152–172 threads the bilayer; sequence EIVIGIGCAILADLLFSPRSI. Topologically, residues 173–369 are periplasmic; that stretch reads KQEVDRELDC…RTTLSCILGT (197 aa). The chain crosses the membrane as a helical span at residues 370-390; it reads LFWLWTGWTSGNGAMVMIAVV. Residues 391–406 lie on the Cytoplasmic side of the membrane; it reads TSLAMRLPNPRMVCID. The chain crosses the membrane as a helical span at residues 407-427; sequence FIYGTLAALPLGLLYFLVIIP. Residues 428–430 lie on the Periplasmic side of the membrane; the sequence is NTQ. Residues 431–451 traverse the membrane as a helical segment; the sequence is QSMLLLCLSLAVLGFFIGIEV. The Cytoplasmic segment spans residues 452–459; the sequence is QKRRLGSM. The helical transmembrane segment at 460–480 threads the bilayer; the sequence is GALASTINIIVLDNPMTFHFI. A topological domain (periplasmic) is located at residue Gln-481. The helical transmembrane segment at 482–502 threads the bilayer; that stretch reads FLDSALGQIVGCMLAFIVILL. Residues 503–655 lie on the Cytoplasmic side of the membrane; it reads VRDKSKDRTG…HKYQNALTDS (153 aa).

It belongs to the aromatic acid exporter ArAE (TC 2.A.85) family.

Its subcellular location is the cell inner membrane. Functionally, forms an efflux pump with AaeA. Could function as a metabolic relief valve, allowing to eliminate certain compounds when they accumulate to high levels in the cell. The chain is p-hydroxybenzoic acid efflux pump subunit AaeB from Salmonella typhi.